Here is a 171-residue protein sequence, read N- to C-terminus: Serine acetyltransferase (171 aa).

The protein belongs to the transferase hexapeptide repeat family.

It localises to the cytoplasm. It carries out the reaction L-serine + acetyl-CoA = O-acetyl-L-serine + CoA. It participates in amino-acid biosynthesis; L-cysteine biosynthesis; L-cysteine from L-serine: step 1/2. The sequence is that of Serine acetyltransferase (cysE) from Helicobacter pylori (strain ATCC 700392 / 26695) (Campylobacter pylori).